The sequence spans 241 residues: Phosphoribosylaminoimidazole-succinocarboxamide synthase (241 aa).

It belongs to the SAICAR synthetase family.

It carries out the reaction 5-amino-1-(5-phospho-D-ribosyl)imidazole-4-carboxylate + L-aspartate + ATP = (2S)-2-[5-amino-1-(5-phospho-beta-D-ribosyl)imidazole-4-carboxamido]succinate + ADP + phosphate + 2 H(+). The protein operates within purine metabolism; IMP biosynthesis via de novo pathway; 5-amino-1-(5-phospho-D-ribosyl)imidazole-4-carboxamide from 5-amino-1-(5-phospho-D-ribosyl)imidazole-4-carboxylate: step 1/2. The polypeptide is Phosphoribosylaminoimidazole-succinocarboxamide synthase (Oenococcus oeni (strain ATCC BAA-331 / PSU-1)).